We begin with the raw amino-acid sequence, 343 residues long: N-acetyl-gamma-glutamyl-phosphate reductase (343 aa).

The active site involves C147.

Belongs to the NAGSA dehydrogenase family. Type 1 subfamily.

The protein resides in the cytoplasm. It catalyses the reaction N-acetyl-L-glutamate 5-semialdehyde + phosphate + NADP(+) = N-acetyl-L-glutamyl 5-phosphate + NADPH + H(+). Its pathway is amino-acid biosynthesis; L-arginine biosynthesis; N(2)-acetyl-L-ornithine from L-glutamate: step 3/4. In terms of biological role, catalyzes the NADPH-dependent reduction of N-acetyl-5-glutamyl phosphate to yield N-acetyl-L-glutamate 5-semialdehyde. The polypeptide is N-acetyl-gamma-glutamyl-phosphate reductase (Staphylococcus aureus (strain USA300)).